We begin with the raw amino-acid sequence, 182 residues long: Small ribosomal subunit protein uS4c (182 aa).

Positions 82-143 constitute an S4 RNA-binding domain; the sequence is MRLDNILFRL…KQRSKALIQN (62 aa).

Belongs to the universal ribosomal protein uS4 family. In terms of assembly, part of the 30S ribosomal subunit. Contacts protein S5. The interaction surface between S4 and S5 is involved in control of translational fidelity.

It is found in the plastid. The protein resides in the chloroplast. Functionally, one of the primary rRNA binding proteins, it binds directly to 16S rRNA where it nucleates assembly of the body of the 30S subunit. Its function is as follows. With S5 and S12 plays an important role in translational accuracy. The chain is Small ribosomal subunit protein uS4c (rps4) from Isophysis tasmanica.